Here is a 379-residue protein sequence, read N- to C-terminus: Putative FBD-associated F-box protein At5g38570 (379 aa).

An F-box domain is found at 1–47; that stretch reads MDNINGLPDDLLVKILSFVPTYVAVSTCVLSKRWEFLWMWLPNLEFV. The 51-residue stretch at 295–345 folds into the FBD domain; sequence CWNQPSSVLECLLSSLKILNWSAYFGRPQDRDIAVYILKNACHLKTATFLT.

The sequence is that of Putative FBD-associated F-box protein At5g38570 from Arabidopsis thaliana (Mouse-ear cress).